A 309-amino-acid polypeptide reads, in one-letter code: L-aminoadipate-semialdehyde dehydrogenase-phosphopantetheinyl transferase (309 aa).

Residues Arg47, 86–91 (RTAKGK), and 108–111 (NISH) each bind CoA. 2 residues coordinate Mg(2+): Asp129 and Glu181. 181–185 (ESFIK) contacts CoA. The residue at position 258 (Ser258) is a Phosphoserine.

It belongs to the P-Pant transferase superfamily. AcpS family. In terms of assembly, monomer. Mg(2+) serves as cofactor.

The protein localises to the cytoplasm. Its subcellular location is the cytosol. The catalysed reaction is apo-[ACP] + CoA = holo-[ACP] + adenosine 3',5'-bisphosphate + H(+). It carries out the reaction apo-[ACP] + acetyl-CoA = acetyl-[ACP] + adenosine 3',5'-bisphosphate + H(+). Its function is as follows. Catalyzes the post-translational modification of target proteins by phosphopantetheine. Can transfer the 4'-phosphopantetheine moiety from coenzyme A, regardless of whether the CoA is presented in the free thiol form or as an acetyl thioester, to a serine residue of a broad range of acceptors including the acyl carrier domain of FASN. This chain is L-aminoadipate-semialdehyde dehydrogenase-phosphopantetheinyl transferase (AASDHPPT), found in Pongo abelii (Sumatran orangutan).